The following is a 129-amino-acid chain: Small ribosomal subunit protein uS11 (129 aa).

The protein belongs to the universal ribosomal protein uS11 family. As to quaternary structure, part of the 30S ribosomal subunit. Interacts with proteins S7 and S18. Binds to IF-3.

Functionally, located on the platform of the 30S subunit, it bridges several disparate RNA helices of the 16S rRNA. Forms part of the Shine-Dalgarno cleft in the 70S ribosome. The chain is Small ribosomal subunit protein uS11 from Azoarcus sp. (strain BH72).